Reading from the N-terminus, the 79-residue chain is Acyl carrier protein (79 aa).

A Carrier domain is found at 2 to 77 (STIEERVKKI…QAIDYVKVHV (76 aa)). S37 carries the post-translational modification O-(pantetheine 4'-phosphoryl)serine.

The protein belongs to the acyl carrier protein (ACP) family. 4'-phosphopantetheine is transferred from CoA to a specific serine of apo-ACP by AcpS. This modification is essential for activity because fatty acids are bound in thioester linkage to the sulfhydryl of the prosthetic group.

It is found in the cytoplasm. It participates in lipid metabolism; fatty acid biosynthesis. Functionally, carrier of the growing fatty acid chain in fatty acid biosynthesis. This is Acyl carrier protein from Xanthomonas albilineans.